Here is a 204-residue protein sequence, read N- to C-terminus: Large ribosomal subunit protein eL15 (204 aa).

The protein belongs to the eukaryotic ribosomal protein eL15 family. In terms of assembly, component of the large ribosomal subunit.

The protein resides in the cytoplasm. Its function is as follows. Component of the large ribosomal subunit. The ribosome is a large ribonucleoprotein complex responsible for the synthesis of proteins in the cell. The polypeptide is Large ribosomal subunit protein eL15 (rpl15) (Monopterus albus (Swamp eel)).